Consider the following 357-residue polypeptide: 3-isopropylmalate dehydrogenase (357 aa).

Residue 76–89 participates in NAD(+) binding; the sequence is GPKWDDLPSEKRPE. Residues Arg96, Arg106, Arg135, and Asp224 each coordinate substrate. Positions 224, 248, and 252 each coordinate Mg(2+). An NAD(+)-binding site is contributed by 282–294; that stretch reads GSAPDIAGQDKAN.

The protein belongs to the isocitrate and isopropylmalate dehydrogenases family. LeuB type 1 subfamily. As to quaternary structure, homodimer. It depends on Mg(2+) as a cofactor. Requires Mn(2+) as cofactor.

It is found in the cytoplasm. It carries out the reaction (2R,3S)-3-isopropylmalate + NAD(+) = 4-methyl-2-oxopentanoate + CO2 + NADH. The protein operates within amino-acid biosynthesis; L-leucine biosynthesis; L-leucine from 3-methyl-2-oxobutanoate: step 3/4. Its function is as follows. Catalyzes the oxidation of 3-carboxy-2-hydroxy-4-methylpentanoate (3-isopropylmalate) to 3-carboxy-4-methyl-2-oxopentanoate. The product decarboxylates to 4-methyl-2 oxopentanoate. This is 3-isopropylmalate dehydrogenase from Nitratidesulfovibrio vulgaris (strain ATCC 29579 / DSM 644 / CCUG 34227 / NCIMB 8303 / VKM B-1760 / Hildenborough) (Desulfovibrio vulgaris).